A 113-amino-acid polypeptide reads, in one-letter code: Non-structural protein 1 (113 aa).

Belongs to the pneumovirus non-structural protein 1 family.

The protein localises to the host cytoplasm. It localises to the host mitochondrion. Its function is as follows. May play a minor role in antagonizing the type I IFN-mediated antiviral response. Additionally, NS1 may serve some inhibitory role in viral transcription and RNA replication. The chain is Non-structural protein 1 (1C) from Mus musculus (Mouse).